The sequence spans 248 residues: tRNA (guanine-N(1)-)-methyltransferase (248 aa).

S-adenosyl-L-methionine is bound by residues G113 and 133 to 138; that span reads IGDFVL.

Belongs to the RNA methyltransferase TrmD family. In terms of assembly, homodimer.

Its subcellular location is the cytoplasm. It carries out the reaction guanosine(37) in tRNA + S-adenosyl-L-methionine = N(1)-methylguanosine(37) in tRNA + S-adenosyl-L-homocysteine + H(+). Its function is as follows. Specifically methylates guanosine-37 in various tRNAs. The sequence is that of tRNA (guanine-N(1)-)-methyltransferase from Dehalococcoides mccartyi (strain ATCC BAA-2266 / KCTC 15142 / 195) (Dehalococcoides ethenogenes (strain 195)).